A 110-amino-acid chain; its full sequence is Large ribosomal subunit protein bL20 (110 aa).

This sequence belongs to the bacterial ribosomal protein bL20 family.

Binds directly to 23S ribosomal RNA and is necessary for the in vitro assembly process of the 50S ribosomal subunit. It is not involved in the protein synthesizing functions of that subunit. This Shigella boydii serotype 4 (strain Sb227) protein is Large ribosomal subunit protein bL20.